The following is a 212-amino-acid chain: Uracil phosphoribosyltransferase (212 aa).

5-phospho-alpha-D-ribose 1-diphosphate is bound by residues Arg78, Arg103, and 130 to 138 (DPMLATGGS). Uracil is bound by residues Ile193 and 198–200 (GDA). Residue Asp199 participates in 5-phospho-alpha-D-ribose 1-diphosphate binding.

This sequence belongs to the UPRTase family. Mg(2+) is required as a cofactor.

It carries out the reaction UMP + diphosphate = 5-phospho-alpha-D-ribose 1-diphosphate + uracil. It participates in pyrimidine metabolism; UMP biosynthesis via salvage pathway; UMP from uracil: step 1/1. Its activity is regulated as follows. Allosterically activated by GTP. Its function is as follows. Catalyzes the conversion of uracil and 5-phospho-alpha-D-ribose 1-diphosphate (PRPP) to UMP and diphosphate. The sequence is that of Uracil phosphoribosyltransferase from Azotobacter vinelandii (strain DJ / ATCC BAA-1303).